We begin with the raw amino-acid sequence, 530 residues long: Pyridoxine/pyridoxamine 5'-phosphate oxidase 1, chloroplastic (530 aa).

A chloroplast-targeting transit peptide spans 1 to 64; sequence MRNVIRRVTT…TLCTKVIIPN (64 aa). M65 is subject to N-acetylmethionine. One can recognise a YjeF N-terminal domain in the interval 81–297; the sequence is AAEIDETLMG…SVAEKYKLEL (217 aa). 131-135 lines the (6S)-NADPHX pocket; it reads NNGGD. 2 residues coordinate K(+): N132 and D196. (6S)-NADPHX is bound by residues 200–206 and D238; that span reads GFSFHGA. Position 241 (S241) interacts with K(+). Residue 247–250 participates in pyridoxal 5'-phosphate binding; it reads EGDH. Residue 321-324 participates in substrate binding; the sequence is RVNY. 325–327 contacts pyridoxal 5'-phosphate; it reads VSP. 374 to 377 lines the FMN pocket; the sequence is RMVL. K379 lines the pyridoxal 5'-phosphate pocket. Residues 389 to 390, 395 to 396, and Q418 contribute to the FMN site; these read FT and KK. The pyridoxal 5'-phosphate site is built by Y436, R440, and S444. FMN contacts are provided by residues 453–454 and W499; that span reads QS. Residue 505–507 coordinates pyridoxal 5'-phosphate; sequence RLH. R509 lines the FMN pocket.

The protein in the N-terminal section; belongs to the NnrE/AIBP family. This sequence in the C-terminal section; belongs to the pyridoxamine 5'-phosphate oxidase family. As to quaternary structure, homodimer. FMN is required as a cofactor. Requires K(+) as cofactor. As to expression, expressed in leaves, stems, flowers and roots.

It localises to the plastid. It is found in the chloroplast. It catalyses the reaction pyridoxamine 5'-phosphate + O2 + H2O = pyridoxal 5'-phosphate + H2O2 + NH4(+). It carries out the reaction pyridoxine 5'-phosphate + O2 = pyridoxal 5'-phosphate + H2O2. The enzyme catalyses (6R)-NADHX = (6S)-NADHX. The catalysed reaction is (6R)-NADPHX = (6S)-NADPHX. The protein operates within cofactor metabolism; pyridoxal 5'-phosphate salvage; pyridoxal 5'-phosphate from pyridoxamine 5'-phosphate: step 1/1. Its pathway is cofactor metabolism; pyridoxal 5'-phosphate salvage; pyridoxal 5'-phosphate from pyridoxine 5'-phosphate: step 1/1. In terms of biological role, catalyzes the oxidation of either pyridoxine 5'-phosphate (PNP) or pyridoxamine 5'-phosphate (PMP) into pyridoxal 5'-phosphate (PLP). Involved in the PLP salvage pathway. Has a higher preference for PNP over PMP. May also catalyze the epimerization of the S- and R-forms of NAD(P)HX, a damaged form of NAD(P)H that is a result of enzymatic or heat-dependent hydration. This is a prerequisite for the S-specific NAD(P)H-hydrate dehydratase to allow the repair of both epimers of NAD(P)HX. This chain is Pyridoxine/pyridoxamine 5'-phosphate oxidase 1, chloroplastic (PPOX1), found in Arabidopsis thaliana (Mouse-ear cress).